Here is a 315-residue protein sequence, read N- to C-terminus: Probable carboxylesterase 3 (315 aa).

Met-1 is modified (N-acetylmethionine). Residues 81 to 83 carry the Involved in the stabilization of the negatively charged intermediate by the formation of the oxyanion hole motif; that stretch reads HGG. Catalysis depends on residues Ser-160, Asp-258, and His-290.

The protein belongs to the 'GDXG' lipolytic enzyme family. As to expression, expressed in flowers and siliques.

The enzyme catalyses a carboxylic ester + H2O = an alcohol + a carboxylate + H(+). In terms of biological role, carboxylesterase acting on esters with varying acyl chain length. This is Probable carboxylesterase 3 (CXE3) from Arabidopsis thaliana (Mouse-ear cress).